The following is a 295-amino-acid chain: Undecaprenyl-diphosphatase (295 aa).

7 helical membrane passes run 12–34 (IAIA…HAVV), 50–70 (FLPF…LYFW), 95–115 (IFML…LLEH), 120–140 (LFES…LLLF), 209–229 (AHFS…LEVP), 243–263 (TAAL…AFLM), and 272–292 (WALK…LAWL).

It belongs to the UppP family.

The protein resides in the cell inner membrane. It carries out the reaction di-trans,octa-cis-undecaprenyl diphosphate + H2O = di-trans,octa-cis-undecaprenyl phosphate + phosphate + H(+). Functionally, catalyzes the dephosphorylation of undecaprenyl diphosphate (UPP). Confers resistance to bacitracin. The protein is Undecaprenyl-diphosphatase of Granulibacter bethesdensis (strain ATCC BAA-1260 / CGDNIH1).